Consider the following 320-residue polypeptide: Methionyl-tRNA formyltransferase (320 aa).

112-115 is a (6S)-5,6,7,8-tetrahydrofolate binding site; the sequence is SLLP.

This sequence belongs to the Fmt family.

The enzyme catalyses L-methionyl-tRNA(fMet) + (6R)-10-formyltetrahydrofolate = N-formyl-L-methionyl-tRNA(fMet) + (6S)-5,6,7,8-tetrahydrofolate + H(+). Attaches a formyl group to the free amino group of methionyl-tRNA(fMet). The formyl group appears to play a dual role in the initiator identity of N-formylmethionyl-tRNA by promoting its recognition by IF2 and preventing the misappropriation of this tRNA by the elongation apparatus. The chain is Methionyl-tRNA formyltransferase from Allorhizobium ampelinum (strain ATCC BAA-846 / DSM 112012 / S4) (Agrobacterium vitis (strain S4)).